A 213-amino-acid chain; its full sequence is Thymidylate kinase (213 aa).

Position 10 to 17 (10 to 17 (GLEGAGKT)) interacts with ATP.

The protein belongs to the thymidylate kinase family.

The enzyme catalyses dTMP + ATP = dTDP + ADP. Its function is as follows. Phosphorylation of dTMP to form dTDP in both de novo and salvage pathways of dTTP synthesis. This is Thymidylate kinase from Escherichia coli O157:H7 (strain EC4115 / EHEC).